The following is a 398-amino-acid chain: Serine/threonine-protein kinase ppk23 (398 aa).

The Protein kinase domain occupies 74 to 359 (YEILEKIEEG…AKEALEHPYF (286 aa)). ATP-binding positions include 80 to 88 (IEEGSYGIV) and Lys-103. Asp-198 functions as the Proton acceptor in the catalytic mechanism. A disordered region spans residues 359–398 (FYESPRPKDPKFFPTFPSKAKGESKEKNVFQSFRSASPKK). Residues 387–398 (VFQSFRSASPKK) show a composition bias toward polar residues.

This sequence belongs to the protein kinase superfamily. Ser/Thr protein kinase family.

Its subcellular location is the nucleus. It carries out the reaction L-seryl-[protein] + ATP = O-phospho-L-seryl-[protein] + ADP + H(+). It catalyses the reaction L-threonyl-[protein] + ATP = O-phospho-L-threonyl-[protein] + ADP + H(+). The chain is Serine/threonine-protein kinase ppk23 (ppk23) from Schizosaccharomyces pombe (strain 972 / ATCC 24843) (Fission yeast).